The primary structure comprises 183 residues: Adenine phosphoribosyltransferase (183 aa).

The protein belongs to the purine/pyrimidine phosphoribosyltransferase family. Homodimer.

The protein localises to the cytoplasm. The catalysed reaction is AMP + diphosphate = 5-phospho-alpha-D-ribose 1-diphosphate + adenine. It participates in purine metabolism; AMP biosynthesis via salvage pathway; AMP from adenine: step 1/1. Its function is as follows. Catalyzes a salvage reaction resulting in the formation of AMP, that is energically less costly than de novo synthesis. The chain is Adenine phosphoribosyltransferase from Erwinia tasmaniensis (strain DSM 17950 / CFBP 7177 / CIP 109463 / NCPPB 4357 / Et1/99).